The sequence spans 348 residues: NADH-ubiquinone oxidoreductase chain 2 (348 aa).

11 helical membrane-spanning segments follow: residues 1–21 (MMTL…MFSS), 23–43 (WFFA…MMLF), 56–76 (YFIS…WNYF), 92–112 (ITLI…HFWL), 123–143 (MGLI…IQVS), 148–168 (NMYI…FGGL), 176–196 (LLAY…AVSA), 198–218 (LSWV…TILI), 242–262 (CILV…FLKL), 272–292 (SLIL…FFYL), and 321–341 (LLFN…PFMI).

This sequence belongs to the complex I subunit 2 family.

It is found in the mitochondrion inner membrane. It carries out the reaction a ubiquinone + NADH + 5 H(+)(in) = a ubiquinol + NAD(+) + 4 H(+)(out). Functionally, core subunit of the mitochondrial membrane respiratory chain NADH dehydrogenase (Complex I) that is believed to belong to the minimal assembly required for catalysis. Complex I functions in the transfer of electrons from NADH to the respiratory chain. The immediate electron acceptor for the enzyme is believed to be ubiquinone. In Myxine glutinosa (Atlantic hagfish), this protein is NADH-ubiquinone oxidoreductase chain 2 (MT-ND2).